A 239-amino-acid chain; its full sequence is Large ribosomal subunit protein uL1 (239 aa).

This sequence belongs to the universal ribosomal protein uL1 family. In terms of assembly, part of the 50S ribosomal subunit.

Functionally, binds directly to 23S rRNA. The L1 stalk is quite mobile in the ribosome, and is involved in E site tRNA release. Protein L1 is also a translational repressor protein, it controls the translation of the L11 operon by binding to its mRNA. This chain is Large ribosomal subunit protein uL1, found in Rickettsia conorii (strain ATCC VR-613 / Malish 7).